The chain runs to 980 residues: Macrophage colony-stimulating factor 1 receptor (980 aa).

An N-terminal signal peptide occupies residues 1 to 19 (MGPRALLVLLVATAWHAQG). Residues 20–514 (VPVIQPSGPE…QLPDELLFTP (495 aa)) lie on the Extracellular side of the membrane. Ig-like C2-type domains are found at residues 21–100 (PVIQ…IHLY), 107–197 (PWKV…KVQK), 202–297 (PATL…RVVE), 299–397 (AYLN…LTLR), and 400–499 (PEVR…WPIS). C42 and C84 are joined by a disulfide. N-linked (GlcNAc...) asparagine glycosylation is found at N45, N73, N94, N153, N275, N286, N302, N335, N410, N477, and N490. Disulfide bonds link C127–C177 and C224–C278. A disulfide bridge links C417 with C482. A helical transmembrane segment spans residues 515 to 535 (VLLTCMSIMALLLLLLLLLLY). The Cytoplasmic segment spans residues 536 to 980 (KYKQKPKYQV…LLQPNNYQFC (445 aa)). Residues 539–571 (QKPKYQVRWKIIESYEGNSYTFIDPTQLPYNEK) form a regulatory juxtamembrane domain region. Phosphotyrosine; by autocatalysis occurs at positions 543 and 558. The Protein kinase domain maps to 579 to 908 (LQFGKTLGAG…PTFQQICSLL (330 aa)). Residues 585 to 593 (LGAGAFGKV) and K613 each bind ATP. A phosphotyrosine; by autocatalysis mark is found at Y696 and Y705. The residue at position 710 (S710) is a Phosphoserine. Position 720 is a phosphotyrosine; by autocatalysis (Y720). A disordered region spans residues 723–743 (MRPVSTSSSNDSFSEEDLGKE). The active-site Proton acceptor is D776. The activation loop stretch occupies residues 794-816 (DFGLARDIMNDSNYIVKGNARLP). A phosphotyrosine; by autocatalysis mark is found at Y807 and Y921. The interval 918-959 (VPNYTNLPSSSSSSSSSSSSCRTGSGGGSSSEPEEESSSEHL) is disordered. Positions 926–940 (SSSSSSSSSSSSCRT) are enriched in low complexity. Y977 carries the phosphotyrosine; by autocatalysis modification.

This sequence belongs to the protein kinase superfamily. Tyr protein kinase family. CSF-1/PDGF receptor subfamily. Monomer. Homodimer. Interacts with CSF1 and IL34. Interaction with dimeric CSF1 or IL34 leads to receptor homodimerization. Interacts with INPPL1/SHIP2 and THOC5. Interacts (tyrosine phosphorylated) with PLCG2 (via SH2 domain). Interacts (tyrosine phosphorylated) with PIK3R1 (via SH2 domain). Interacts (tyrosine phosphorylated) with FYN, YES1 and SRC (via SH2 domain). Interacts (tyrosine phosphorylated) with CBL, GRB2 and SLA2. Post-translationally, autophosphorylated in response to CSF1 or IL34 binding. Phosphorylation at Tyr-558 is important for normal down-regulation of signaling by ubiquitination, internalization and degradation. Phosphorylation at Tyr-558 and Tyr-807 is important for interaction with SRC family members, including FYN, YES1 and SRC, and for subsequent activation of these protein kinases. Phosphorylation at Tyr-696 and Tyr-921 is important for interaction with GRB2. Phosphorylation at Tyr-720 is important for interaction with PIK3R1. Phosphorylation at Tyr-720 and Tyr-807 is important for interaction with PLCG2. Phosphorylation at Tyr-977 is important for interaction with CBL. Dephosphorylation by PTPN2 negatively regulates downstream signaling and macrophage differentiation. In terms of processing, ubiquitinated. Becomes rapidly polyubiquitinated after autophosphorylation, leading to its degradation.

It localises to the cell membrane. It catalyses the reaction L-tyrosyl-[protein] + ATP = O-phospho-L-tyrosyl-[protein] + ADP + H(+). Its activity is regulated as follows. Present in an inactive conformation in the absence of bound ligand. CSF1 or IL34 binding leads to dimerization and activation by autophosphorylation on tyrosine residues. Its function is as follows. Tyrosine-protein kinase that acts as a cell-surface receptor for CSF1 and IL34 and plays an essential role in the regulation of survival, proliferation and differentiation of hematopoietic precursor cells, especially mononuclear phagocytes, such as macrophages and monocytes. Promotes the release of pro-inflammatory chemokines in response to IL34 and CSF1, and thereby plays an important role in innate immunity and in inflammatory processes. Plays an important role in the regulation of osteoclast proliferation and differentiation, the regulation of bone resorption, and is required for normal bone and tooth development. Required for normal male and female fertility, and for normal development of milk ducts and acinar structures in the mammary gland during pregnancy. Promotes reorganization of the actin cytoskeleton, regulates formation of membrane ruffles, cell adhesion and cell migration, and promotes cancer cell invasion. Activates several signaling pathways in response to ligand binding, including the ERK1/2 and the JNK pathway. Phosphorylates PIK3R1, PLCG2, GRB2, SLA2 and CBL. Activation of PLCG2 leads to the production of the cellular signaling molecules diacylglycerol and inositol 1,4,5-trisphosphate, that then lead to the activation of protein kinase C family members, especially PRKCD. Phosphorylation of PIK3R1, the regulatory subunit of phosphatidylinositol 3-kinase, leads to activation of the AKT1 signaling pathway. Activated CSF1R also mediates activation of the MAP kinases MAPK1/ERK2 and/or MAPK3/ERK1, and of the SRC family kinases SRC, FYN and YES1. Activated CSF1R transmits signals both via proteins that directly interact with phosphorylated tyrosine residues in its intracellular domain, or via adapter proteins, such as GRB2. Promotes activation of STAT family members STAT3, STAT5A and/or STAT5B. Promotes tyrosine phosphorylation of SHC1 and INPP5D/SHIP-1. Receptor signaling is down-regulated by protein phosphatases, such as INPP5D/SHIP-1, that dephosphorylate the receptor and its downstream effectors, and by rapid internalization of the activated receptor. In the central nervous system, may play a role in the development of microglia macrophages. This chain is Macrophage colony-stimulating factor 1 receptor (CSF1R), found in Felis catus (Cat).